A 507-amino-acid polypeptide reads, in one-letter code: L-threonine dehydratase biosynthetic IlvA (507 aa).

Position 52 is an N6-(pyridoxal phosphate)lysine (Lys52). Residues Asn79, Gly182–Leu186, and Ser309 contribute to the pyridoxal 5'-phosphate site. 2 ACT-like domains span residues Ala333–His404 and Arg427–Ala498.

It belongs to the serine/threonine dehydratase family. As to quaternary structure, homotetramer. Pyridoxal 5'-phosphate is required as a cofactor.

The enzyme catalyses L-threonine = 2-oxobutanoate + NH4(+). It participates in amino-acid biosynthesis; L-isoleucine biosynthesis; 2-oxobutanoate from L-threonine: step 1/1. Its function is as follows. Catalyzes the anaerobic formation of alpha-ketobutyrate and ammonia from threonine in a two-step reaction. The first step involved a dehydration of threonine and a production of enamine intermediates (aminocrotonate), which tautomerizes to its imine form (iminobutyrate). Both intermediates are unstable and short-lived. The second step is the nonenzymatic hydrolysis of the enamine/imine intermediates to form 2-ketobutyrate and free ammonia. In the low water environment of the cell, the second step is accelerated by RidA. The polypeptide is L-threonine dehydratase biosynthetic IlvA (ilvA) (Burkholderia multivorans (strain ATCC 17616 / 249)).